The chain runs to 64 residues: Small ribosomal subunit protein eS17 (64 aa).

Belongs to the eukaryotic ribosomal protein eS17 family.

This Methanosarcina mazei (strain ATCC BAA-159 / DSM 3647 / Goe1 / Go1 / JCM 11833 / OCM 88) (Methanosarcina frisia) protein is Small ribosomal subunit protein eS17.